The sequence spans 81 residues: Short neurotoxin 1 (81 aa).

Positions Met-1–Thr-21 are cleaved as a signal peptide. 4 disulfide bridges follow: Cys-24–Cys-43, Cys-38–Cys-60, Cys-62–Cys-73, and Cys-74–Cys-79.

The protein belongs to the three-finger toxin family. Short-chain subfamily. Type I alpha-neurotoxin sub-subfamily. In terms of tissue distribution, expressed by the venom gland.

It localises to the secreted. Binds to muscle nicotinic acetylcholine receptor (nAChR) and inhibit acetylcholine from binding to the receptor, thereby impairing neuromuscular transmission. The polypeptide is Short neurotoxin 1 (Hydrophis peronii (Spiny-headed seasnake)).